Consider the following 211-residue polypeptide: Large ribosomal subunit protein uL4 (211 aa).

The disordered stretch occupies residues 40-85; sequence QQAHSRQGTASTLTRSEVRGGGRKPYKQKGTGRARQGSIRTPLRPG. Positions 41–54 are enriched in polar residues; the sequence is QAHSRQGTASTLTR. Residues 60–71 are compositionally biased toward basic residues; sequence GGRKPYKQKGTG.

This sequence belongs to the universal ribosomal protein uL4 family. Part of the 50S ribosomal subunit.

Its function is as follows. One of the primary rRNA binding proteins, this protein initially binds near the 5'-end of the 23S rRNA. It is important during the early stages of 50S assembly. It makes multiple contacts with different domains of the 23S rRNA in the assembled 50S subunit and ribosome. Forms part of the polypeptide exit tunnel. The polypeptide is Large ribosomal subunit protein uL4 (Prochlorococcus marinus (strain NATL2A)).